Reading from the N-terminus, the 330-residue chain is MQKSFILQQQEISFVKNTFTQNLIEQLDIIEVQGPILSEVGNGMQDNLSGIEKAVQVNVKCIPGAVYEVVHSLAKWKRHTLARFGFQEGEGLFVHMKALRPDEDSLDPTHSVYVDQWDWEKVIPAGKRNFDYLKQTVRSIYRAIRLTELAVEARFDIPSVLPKEITFVHSEDLVKRCPTLTSKERENAICKEYGAVFLIGIGGKLSDGKAHDGRAPDYDDWTTVSEGEYKGLNGDILVWNEQLGTAFELSSMGIRVDETALRLQVALTGDEDRLEMDWHKDLLAGRLPLSIGGGIGQSRMAMFLLRKKHIGEVQSSVWPKEMLAKFENIL.

It belongs to the class-II aminoacyl-tRNA synthetase family. AsnA subfamily.

The protein localises to the cytoplasm. It catalyses the reaction L-aspartate + NH4(+) + ATP = L-asparagine + AMP + diphosphate + H(+). It functions in the pathway amino-acid biosynthesis; L-asparagine biosynthesis; L-asparagine from L-aspartate (ammonia route): step 1/1. The protein is Aspartate--ammonia ligase of Glaesserella parasuis serovar 5 (strain SH0165) (Haemophilus parasuis).